Reading from the N-terminus, the 255-residue chain is 5'-nucleotidase SurE (255 aa).

The a divalent metal cation site is built by Asp-8, Asp-9, Ser-40, and Asn-95.

It belongs to the SurE nucleotidase family. A divalent metal cation serves as cofactor.

It localises to the cytoplasm. It catalyses the reaction a ribonucleoside 5'-phosphate + H2O = a ribonucleoside + phosphate. In terms of biological role, nucleotidase that shows phosphatase activity on nucleoside 5'-monophosphates. This is 5'-nucleotidase SurE from Solidesulfovibrio magneticus (strain ATCC 700980 / DSM 13731 / RS-1) (Desulfovibrio magneticus).